We begin with the raw amino-acid sequence, 245 residues long: 1-(5-phosphoribosyl)-5-[(5-phosphoribosylamino)methylideneamino] imidazole-4-carboxamide isomerase (245 aa).

D7 serves as the catalytic Proton acceptor. The active-site Proton donor is the D129.

Belongs to the HisA/HisF family.

The protein resides in the cytoplasm. The catalysed reaction is 1-(5-phospho-beta-D-ribosyl)-5-[(5-phospho-beta-D-ribosylamino)methylideneamino]imidazole-4-carboxamide = 5-[(5-phospho-1-deoxy-D-ribulos-1-ylimino)methylamino]-1-(5-phospho-beta-D-ribosyl)imidazole-4-carboxamide. Its pathway is amino-acid biosynthesis; L-histidine biosynthesis; L-histidine from 5-phospho-alpha-D-ribose 1-diphosphate: step 4/9. The polypeptide is 1-(5-phosphoribosyl)-5-[(5-phosphoribosylamino)methylideneamino] imidazole-4-carboxamide isomerase (Shewanella baltica (strain OS195)).